A 351-amino-acid polypeptide reads, in one-letter code: 7,8-didemethyl-8-hydroxy-5-deazariboflavin synthase (351 aa).

The Radical SAM core domain maps to 35 to 275; sequence ITYSKNAFIP…EDISIQVPPN (241 aa). Residues Cys-49, Cys-53, and Cys-56 each contribute to the [4Fe-4S] cluster site.

The protein belongs to the radical SAM superfamily. CofG family. In terms of assembly, consists of two subunits, CofG and CofH. It depends on [4Fe-4S] cluster as a cofactor.

It carries out the reaction 5-amino-5-(4-hydroxybenzyl)-6-(D-ribitylimino)-5,6-dihydrouracil + S-adenosyl-L-methionine = 7,8-didemethyl-8-hydroxy-5-deazariboflavin + 5'-deoxyadenosine + L-methionine + NH4(+) + H(+). It functions in the pathway cofactor biosynthesis; coenzyme F0 biosynthesis. Its function is as follows. Catalyzes the radical-mediated synthesis of 7,8-didemethyl-8-hydroxy-5-deazariboflavin from 5-amino-5-(4-hydroxybenzyl)-6-(D-ribitylimino)-5,6-dihydrouracil. This chain is 7,8-didemethyl-8-hydroxy-5-deazariboflavin synthase, found in Methanococcus vannielii (strain ATCC 35089 / DSM 1224 / JCM 13029 / OCM 148 / SB).